We begin with the raw amino-acid sequence, 372 residues long: UDP-N-acetylglucosamine--N-acetylmuramyl-(pentapeptide) pyrophosphoryl-undecaprenol N-acetylglucosamine transferase (372 aa).

Residues threonine 16–glycine 18, asparagine 128, arginine 164, serine 192, isoleucine 250, and glutamine 295 contribute to the UDP-N-acetyl-alpha-D-glucosamine site.

This sequence belongs to the glycosyltransferase 28 family. MurG subfamily.

The protein localises to the cell inner membrane. The enzyme catalyses di-trans,octa-cis-undecaprenyl diphospho-N-acetyl-alpha-D-muramoyl-L-alanyl-D-glutamyl-meso-2,6-diaminopimeloyl-D-alanyl-D-alanine + UDP-N-acetyl-alpha-D-glucosamine = di-trans,octa-cis-undecaprenyl diphospho-[N-acetyl-alpha-D-glucosaminyl-(1-&gt;4)]-N-acetyl-alpha-D-muramoyl-L-alanyl-D-glutamyl-meso-2,6-diaminopimeloyl-D-alanyl-D-alanine + UDP + H(+). Its pathway is cell wall biogenesis; peptidoglycan biosynthesis. Functionally, cell wall formation. Catalyzes the transfer of a GlcNAc subunit on undecaprenyl-pyrophosphoryl-MurNAc-pentapeptide (lipid intermediate I) to form undecaprenyl-pyrophosphoryl-MurNAc-(pentapeptide)GlcNAc (lipid intermediate II). The chain is UDP-N-acetylglucosamine--N-acetylmuramyl-(pentapeptide) pyrophosphoryl-undecaprenol N-acetylglucosamine transferase from Paraburkholderia phytofirmans (strain DSM 17436 / LMG 22146 / PsJN) (Burkholderia phytofirmans).